The sequence spans 207 residues: Methylated-DNA--protein-cysteine methyltransferase (207 aa).

Residue C5 coordinates Zn(2+). S14 is modified (phosphoserine). 3 residues coordinate Zn(2+): C24, H29, and H85. Residues T95, Y114, Q115, N123, and R128 each coordinate DNA. Residue C145 is the Nucleophile; methyl group acceptor of the active site. S151 contacts DNA. S201 is modified (phosphoserine).

Belongs to the MGMT family. Zn(2+) is required as a cofactor.

Its subcellular location is the nucleus. The catalysed reaction is a 6-O-methyl-2'-deoxyguanosine in DNA + L-cysteinyl-[protein] = S-methyl-L-cysteinyl-[protein] + a 2'-deoxyguanosine in DNA. The enzyme catalyses a 4-O-methyl-thymidine in DNA + L-cysteinyl-[protein] = a thymidine in DNA + S-methyl-L-cysteinyl-[protein]. Involved in the cellular defense against the biological effects of O6-methylguanine (O6-MeG) and O4-methylthymine (O4-MeT) in DNA. Repairs the methylated nucleobase in DNA by stoichiometrically transferring the methyl group to a cysteine residue in the enzyme. This is a suicide reaction: the enzyme is irreversibly inactivated. This chain is Methylated-DNA--protein-cysteine methyltransferase (MGMT), found in Homo sapiens (Human).